Here is a 290-residue protein sequence, read N- to C-terminus: 2-dehydro-3-deoxy-phosphogluconate/2-dehydro-3-deoxy-6-phosphogalactonate aldolase (290 aa).

Substrate is bound by residues 42-43, 129-131, and 155-157; these read TT, YNY, and KDT. Lys155 (schiff-base intermediate with substrate) is an active-site residue.

It belongs to the DapA family. KDPG aldolase subfamily. In terms of assembly, homotetramer; dimer of dimers.

The catalysed reaction is 2-dehydro-3-deoxy-6-phospho-D-gluconate = D-glyceraldehyde 3-phosphate + pyruvate. It catalyses the reaction 2-dehydro-3-deoxy-6-phospho-D-galactonate = D-glyceraldehyde 3-phosphate + pyruvate. It functions in the pathway carbohydrate acid metabolism; 2-dehydro-3-deoxy-D-gluconate degradation; D-glyceraldehyde 3-phosphate and pyruvate from 2-dehydro-3-deoxy-D-gluconate: step 2/2. Its function is as follows. Involved in the degradation of glucose and galactose via the Entner-Doudoroff pathway. Catalyzes the reversible cleavage of 2-keto-3-deoxy-6-phosphogluconate (KDPG) and 2-keto-3-deoxygluconate (KDG) forming pyruvate and glyceraldehyde 3-phosphate or glyceraldehyde, respectively. It is also able to catalyze the reversible cleavage of 2-keto-3-deoxy-6-phosphogalactonate (KDPGal) and 2-keto-3-deoxygalactonate (KDGal). The protein is 2-dehydro-3-deoxy-phosphogluconate/2-dehydro-3-deoxy-6-phosphogalactonate aldolase (kdgA) of Sulfurisphaera tokodaii (strain DSM 16993 / JCM 10545 / NBRC 100140 / 7) (Sulfolobus tokodaii).